A 248-amino-acid chain; its full sequence is 2,3-bisphosphoglycerate-dependent phosphoglycerate mutase (248 aa).

Substrate is bound by residues 8–15, 21–22, Arg-60, 87–90, Lys-98, and 114–115; these read RHGESTWN, TG, ERHY, and RR. His-9 serves as the catalytic Tele-phosphohistidine intermediate. Glu-87 functions as the Proton donor/acceptor in the catalytic mechanism. A disordered region spans residues 118-137; it reads DTPPPALEPTDPRASYDDPR. Residues 127-137 show a composition bias toward basic and acidic residues; sequence TDPRASYDDPR. Residue 183–184 coordinates substrate; sequence GN.

It belongs to the phosphoglycerate mutase family. BPG-dependent PGAM subfamily. Homodimer.

It carries out the reaction (2R)-2-phosphoglycerate = (2R)-3-phosphoglycerate. It participates in carbohydrate degradation; glycolysis; pyruvate from D-glyceraldehyde 3-phosphate: step 3/5. Its function is as follows. Catalyzes the interconversion of 2-phosphoglycerate and 3-phosphoglycerate. This is 2,3-bisphosphoglycerate-dependent phosphoglycerate mutase from Cupriavidus necator (strain ATCC 17699 / DSM 428 / KCTC 22496 / NCIMB 10442 / H16 / Stanier 337) (Ralstonia eutropha).